Consider the following 184-residue polypeptide: LPS-assembly lipoprotein LptE (184 aa).

Positions 1–19 (MRHRLFTLVLGLAVLITAG) are cleaved as a signal peptide. C20 carries the N-palmitoyl cysteine lipid modification. C20 carries S-diacylglycerol cysteine lipidation.

Belongs to the LptE lipoprotein family. Component of the lipopolysaccharide transport and assembly complex. Interacts with LptD.

The protein localises to the cell outer membrane. Functionally, together with LptD, is involved in the assembly of lipopolysaccharide (LPS) at the surface of the outer membrane. Required for the proper assembly of LptD. Binds LPS and may serve as the LPS recognition site at the outer membrane. The chain is LPS-assembly lipoprotein LptE from Pectobacterium atrosepticum (strain SCRI 1043 / ATCC BAA-672) (Erwinia carotovora subsp. atroseptica).